The primary structure comprises 296 residues: 4-diphosphocytidyl-2-C-methyl-D-erythritol kinase (296 aa).

Residue lysine 13 is part of the active site. Position 104 to 114 (104 to 114) interacts with ATP; the sequence is PMGGGIGGGSS. The active site involves aspartate 146.

The protein belongs to the GHMP kinase family. IspE subfamily.

The catalysed reaction is 4-CDP-2-C-methyl-D-erythritol + ATP = 4-CDP-2-C-methyl-D-erythritol 2-phosphate + ADP + H(+). The protein operates within isoprenoid biosynthesis; isopentenyl diphosphate biosynthesis via DXP pathway; isopentenyl diphosphate from 1-deoxy-D-xylulose 5-phosphate: step 3/6. Its function is as follows. Catalyzes the phosphorylation of the position 2 hydroxy group of 4-diphosphocytidyl-2C-methyl-D-erythritol. This Hahella chejuensis (strain KCTC 2396) protein is 4-diphosphocytidyl-2-C-methyl-D-erythritol kinase.